The following is a 255-amino-acid chain: tRNA (guanine-N(1)-)-methyltransferase (255 aa).

S-adenosyl-L-methionine is bound by residues G113 and 133–138 (IGDYVL).

The protein belongs to the RNA methyltransferase TrmD family. Homodimer.

It localises to the cytoplasm. It catalyses the reaction guanosine(37) in tRNA + S-adenosyl-L-methionine = N(1)-methylguanosine(37) in tRNA + S-adenosyl-L-homocysteine + H(+). Its function is as follows. Specifically methylates guanosine-37 in various tRNAs. The protein is tRNA (guanine-N(1)-)-methyltransferase of Salmonella agona (strain SL483).